Here is a 573-residue protein sequence, read N- to C-terminus: ESX-1 secretion system protein EccA1 (573 aa).

ATP is bound at residue Gly-334–Thr-341.

The protein belongs to the CbxX/CfxQ family. As to quaternary structure, part of the ESX-1 / type VII secretion system (T7SS), which is composed of cytosolic and membrane components.

It is found in the cytoplasm. In terms of biological role, part of the ESX-1 specialized secretion system, which delivers several virulence factors to host cells during infection, including the key virulence factors EsxA (ESAT-6) and EsxB (CFP-10). EccA1 exhibits ATPase activity and may provide energy for the export of ESX-1 substrates. This chain is ESX-1 secretion system protein EccA1, found in Mycobacterium tuberculosis (strain CDC 1551 / Oshkosh).